A 238-amino-acid polypeptide reads, in one-letter code: 3-deoxy-manno-octulosonate cytidylyltransferase (238 aa).

Belongs to the KdsB family.

The protein localises to the cytoplasm. It carries out the reaction 3-deoxy-alpha-D-manno-oct-2-ulosonate + CTP = CMP-3-deoxy-beta-D-manno-octulosonate + diphosphate. It participates in nucleotide-sugar biosynthesis; CMP-3-deoxy-D-manno-octulosonate biosynthesis; CMP-3-deoxy-D-manno-octulosonate from 3-deoxy-D-manno-octulosonate and CTP: step 1/1. Its pathway is bacterial outer membrane biogenesis; lipopolysaccharide biosynthesis. In terms of biological role, activates KDO (a required 8-carbon sugar) for incorporation into bacterial lipopolysaccharide in Gram-negative bacteria. In Nitratiruptor sp. (strain SB155-2), this protein is 3-deoxy-manno-octulosonate cytidylyltransferase.